The chain runs to 385 residues: Effector protein hopAB3 (385 aa).

Disordered stretches follow at residues 1–61 (MVGI…AGRP), 73–139 (TREW…SPLY), and 215–293 (ADSQ…PRIN). The interval 1–333 (MVGISGRAGP…INMEDLRAAL (333 aa)) is host recognition. Low complexity predominate over residues 217-234 (SQQAARAPARTPPRSSVR). Polar residues-rich tracts occupy residues 245-256 (ATESSSGSNQRS) and 265-283 (MTSNQRRPSSASNASTSQR).

The protein belongs to the HopAB family. As to quaternary structure, interacts physically with plant cell Pto.

The protein localises to the secreted. Its function is as follows. Effector protein involved in gene-for-gene resistance in tomato plants. It is recognized by the host Pto resistance protein and elicits Pto and Prf-dependent hypersensitive response (HR) and programmed cell death (PCD), resulting in host immunity. In susceptible plants, promotes virulence, in part, by enhancing the development of disease symptoms and bacterial growth. This is Effector protein hopAB3 (hopAB3) from Pseudomonas syringae pv. maculicola.